The primary structure comprises 527 residues: Probable bifunctional tRNA threonylcarbamoyladenosine biosynthesis protein (527 aa).

The segment at 1 to 324 (MIVLGLEGTA…YRIDEVDAPW (324 aa)) is kae1. Fe cation contacts are provided by His-107, His-111, and Tyr-128. L-threonylcarbamoyladenylate contacts are provided by residues 128-132 (YVSGG), Asp-160, Gly-173, Glu-177, and Asn-257. Asp-285 lines the Fe cation pocket. In terms of domain architecture, Protein kinase spans 330–527 (VKYRDAGAES…EDIRRRHRYV (198 aa)). Residues 333–341 (RDAGAESRI) and Lys-354 each bind ATP. Asp-445 serves as the catalytic Proton acceptor; for kinase activity.

This sequence in the N-terminal section; belongs to the KAE1 / TsaD family. It in the C-terminal section; belongs to the protein kinase superfamily. Tyr protein kinase family. BUD32 subfamily. As to quaternary structure, component of the KEOPS complex that consists of Kae1, Bud32, Cgi121 and Pcc1; the whole complex dimerizes. Fe(2+) serves as cofactor.

Its subcellular location is the cytoplasm. It catalyses the reaction L-seryl-[protein] + ATP = O-phospho-L-seryl-[protein] + ADP + H(+). The enzyme catalyses L-threonyl-[protein] + ATP = O-phospho-L-threonyl-[protein] + ADP + H(+). The catalysed reaction is L-threonylcarbamoyladenylate + adenosine(37) in tRNA = N(6)-L-threonylcarbamoyladenosine(37) in tRNA + AMP + H(+). Functionally, required for the formation of a threonylcarbamoyl group on adenosine at position 37 (t(6)A37) in tRNAs that read codons beginning with adenine. Is a component of the KEOPS complex that is probably involved in the transfer of the threonylcarbamoyl moiety of threonylcarbamoyl-AMP (TC-AMP) to the N6 group of A37. The Kae1 domain likely plays a direct catalytic role in this reaction. The Bud32 domain probably displays kinase activity that regulates Kae1 function. This chain is Probable bifunctional tRNA threonylcarbamoyladenosine biosynthesis protein, found in Thermoplasma volcanium (strain ATCC 51530 / DSM 4299 / JCM 9571 / NBRC 15438 / GSS1).